An 852-amino-acid chain; its full sequence is Serine/threonine-protein kinase pakB (852 aa).

The disordered stretch occupies residues 1 to 334 (MEQSKRVSMM…NVGNKQDEEK (334 aa)). Ser8 is subject to Phosphoserine; by autocatalysis. Residues 24–35 (SPPPNRKPPPPN) show a composition bias toward pro residues. Residues 44 to 56 (SSLNSSGSSFVSP) are compositionally biased toward low complexity. A compositionally biased stretch (pro residues) spans 57 to 74 (SPSPSPSPQQPVKRPLPS). Composition is skewed to low complexity over residues 90–117 (RPQQQQPEIPVRPTTPTRTPPNLINSNG) and 124–163 (FSSSSGNSGYSSSNNNNSNSNSSINMNGNHSNGLNGGSSN). A compositionally biased stretch (pro residues) spans 181–191 (TPPPPPQPTPS). The span at 201-210 (ASHNNTQHNI) shows a compositional bias: polar residues. Low complexity-rich tracts occupy residues 246 to 270 (SPGSTSPSLGSSNGNIPISTTSTPI) and 293 to 317 (SNSNSNNNNNNNNNNNNNSSNATTS). The region spanning 356–369 (VGSPFNVKHNIHVN) is the CRIB domain. The segment covering 419–433 (AQQEQQALMQKQMQQ) has biased composition (low complexity). A disordered region spans residues 419–526 (AQQEQQALMQ…GILSQQQEQQ (108 aa)). A compositionally biased stretch (basic residues) spans 470–485 (PQHHHQQQPPQQHHHQ). The span at 486-514 (QQQQQHNNNNNNNNNNNNNNNNQQSAQQQ) shows a compositional bias: low complexity. In terms of domain architecture, Protein kinase spans 570–823 (GEGSTKIGEG…AKVLLNHPFL (254 aa)). ATP-binding positions include 576-584 (IGEGAAGEV) and Lys599. The Proton acceptor role is filled by Asp691.

It belongs to the protein kinase superfamily. STE Ser/Thr protein kinase family. STE20 subfamily. As to quaternary structure, interacts with rac1A, rac1B, rac1C, racA, racB, racC and racF1. The cofactor is Mg(2+). In terms of processing, autophosphorylated at Ser-8. This may stimulate interaction with GTP-bound Rac family members which then further stimulates autophosphorylation and kinase activity.

The protein localises to the membrane. Its subcellular location is the cytoplasm. The protein resides in the cytoskeleton. The enzyme catalyses L-seryl-[protein] + ATP = O-phospho-L-seryl-[protein] + ADP + H(+). It catalyses the reaction L-threonyl-[protein] + ATP = O-phospho-L-threonyl-[protein] + ADP + H(+). Regulator of the myosin I component of the cytoskeleton: required for regulation of cytokinesis, phagocytosis and pinocytosis. The chain is Serine/threonine-protein kinase pakB from Dictyostelium discoideum (Social amoeba).